Consider the following 260-residue polypeptide: Phosphate import ATP-binding protein PstB 2 (260 aa).

The 247-residue stretch at 9 to 255 (IKVKDLSFYY…PLDSRTRDYV (247 aa)) folds into the ABC transporter domain. 41 to 48 (GPSGCGKS) provides a ligand contact to ATP.

Belongs to the ABC transporter superfamily. Phosphate importer (TC 3.A.1.7) family. As to quaternary structure, the complex is composed of two ATP-binding proteins (PstB), two transmembrane proteins (PstC and PstA) and a solute-binding protein (PstS).

It localises to the cell inner membrane. The catalysed reaction is phosphate(out) + ATP + H2O = ADP + 2 phosphate(in) + H(+). Its function is as follows. Part of the ABC transporter complex PstSACB involved in phosphate import. Responsible for energy coupling to the transport system. In Nostoc sp. (strain PCC 7120 / SAG 25.82 / UTEX 2576), this protein is Phosphate import ATP-binding protein PstB 2.